The primary structure comprises 345 residues: DNA-directed RNA polymerase subunit alpha (345 aa).

The interval 1–241 is alpha N-terminal domain (alpha-NTD); that stretch reads MLRDTHLALQ…DQLGMFINFE (241 aa). Residues 257 to 345 form an alpha C-terminal domain (alpha-CTD) region; that stretch reads FNPNLLRKVD…ELVKRSDNPF (89 aa).

The protein belongs to the RNA polymerase alpha chain family. In terms of assembly, homodimer. The RNAP catalytic core consists of 2 alpha, 1 beta, 1 beta' and 1 omega subunit. When a sigma factor is associated with the core the holoenzyme is formed, which can initiate transcription.

It catalyses the reaction RNA(n) + a ribonucleoside 5'-triphosphate = RNA(n+1) + diphosphate. Functionally, DNA-dependent RNA polymerase catalyzes the transcription of DNA into RNA using the four ribonucleoside triphosphates as substrates. The chain is DNA-directed RNA polymerase subunit alpha from Acidiphilium cryptum (strain JF-5).